A 509-amino-acid chain; its full sequence is Ribonuclease E/G-like protein (509 aa).

The region spanning 35–117 (SDIYLGCVDK…LTANITLSGR (83 aa)) is the S1 motif domain. 2 residues coordinate Mg(2+): D296 and D339.

The protein belongs to the RNase E/G family. Requires Mg(2+) as cofactor.

It localises to the plastid. It is found in the chloroplast stroma. Its function is as follows. Involved in intercistronic processing of primary transcripts from chloroplast operons. The endonucleolytic activity of the enzyme depends on the number of phosphates at the 5' end, is inhibited by structured RNA, and preferentially cleaves A/U-rich sequences. This is Ribonuclease E/G-like protein (rne) from Pyropia yezoensis (Susabi-nori).